Consider the following 88-residue polypeptide: Phosphocarrier protein HPr (88 aa).

The HPr domain occupies 1-88 (MEKREFNIIA…DTMKKEGLAE (88 aa)). H15 (pros-phosphohistidine intermediate) is an active-site residue. S46 carries the post-translational modification Phosphoserine; by HPrK/P.

It belongs to the HPr family.

The protein localises to the cytoplasm. Phosphorylation on Ser-46 inhibits the phosphoryl transfer from enzyme I to HPr. Functionally, general (non sugar-specific) component of the phosphoenolpyruvate-dependent sugar phosphotransferase system (sugar PTS). This major carbohydrate active-transport system catalyzes the phosphorylation of incoming sugar substrates concomitantly with their translocation across the cell membrane. The phosphoryl group from phosphoenolpyruvate (PEP) is transferred to the phosphoryl carrier protein HPr by enzyme I. Phospho-HPr then transfers it to the PTS EIIA domain. P-Ser-HPr interacts with the catabolite control protein A (CcpA), forming a complex that binds to DNA at the catabolite response elements cre, operator sites preceding a large number of catabolite-regulated genes. Thus, P-Ser-HPr is a corepressor in carbon catabolite repression (CCR), a mechanism that allows bacteria to coordinate and optimize the utilization of available carbon sources. P-Ser-HPr also plays a role in inducer exclusion, in which it probably interacts with several non-PTS permeases and inhibits their transport activity. The protein is Phosphocarrier protein HPr (ptsH) of Lacticaseibacillus casei (Lactobacillus casei).